A 490-amino-acid polypeptide reads, in one-letter code: Aspartyl/glutamyl-tRNA(Asn/Gln) amidotransferase subunit B (490 aa).

This sequence belongs to the GatB/GatE family. GatB subfamily. Heterotrimer of A, B and C subunits.

The enzyme catalyses L-glutamyl-tRNA(Gln) + L-glutamine + ATP + H2O = L-glutaminyl-tRNA(Gln) + L-glutamate + ADP + phosphate + H(+). It carries out the reaction L-aspartyl-tRNA(Asn) + L-glutamine + ATP + H2O = L-asparaginyl-tRNA(Asn) + L-glutamate + ADP + phosphate + 2 H(+). Its function is as follows. Allows the formation of correctly charged Asn-tRNA(Asn) or Gln-tRNA(Gln) through the transamidation of misacylated Asp-tRNA(Asn) or Glu-tRNA(Gln) in organisms which lack either or both of asparaginyl-tRNA or glutaminyl-tRNA synthetases. The reaction takes place in the presence of glutamine and ATP through an activated phospho-Asp-tRNA(Asn) or phospho-Glu-tRNA(Gln). The sequence is that of Aspartyl/glutamyl-tRNA(Asn/Gln) amidotransferase subunit B from Burkholderia pseudomallei (strain K96243).